We begin with the raw amino-acid sequence, 307 residues long: Ethylmalonyl-CoA decarboxylase (307 aa).

Alanine 2 carries the N-acetylalanine modification. Lysine 217 carries the N6-acetyllysine; alternate modification. Lysine 217 is subject to N6-succinyllysine; alternate. Lysine 301 is modified (N6-succinyllysine).

This sequence belongs to the enoyl-CoA hydratase/isomerase family.

The protein localises to the cytoplasm. It is found in the cytosol. It catalyses the reaction (2S)-ethylmalonyl-CoA + H(+) = butanoyl-CoA + CO2. The enzyme catalyses (S)-methylmalonyl-CoA + H(+) = propanoyl-CoA + CO2. The catalysed reaction is (2R)-ethylmalonyl-CoA + H(+) = butanoyl-CoA + CO2. Functionally, decarboxylates ethylmalonyl-CoA, a potentially toxic metabolite, to form butyryl-CoA, suggesting it might be involved in metabolite proofreading. Acts preferentially on (S)-ethylmalonyl-CoA but also has some activity on the (R)-isomer. Also has methylmalonyl-CoA decarboxylase activity at lower level. The polypeptide is Ethylmalonyl-CoA decarboxylase (ECHDC1) (Homo sapiens (Human)).